We begin with the raw amino-acid sequence, 260 residues long: Late transcription factor 1 (260 aa).

It belongs to the chordopoxvirinae VLTF-1 family. As to quaternary structure, interacts with the late transcription factors VLTF-2 and VLTF-3. Interacts with the late transcription elongation factor VLTF-4. Interacts with itself.

In terms of biological role, associates with RNA polymerase to initiate transcription from late gene promoters. The sequence is that of Late transcription factor 1 (OPG093) from Homo sapiens (Human).